Here is a 174-residue protein sequence, read N- to C-terminus: MTIILGIDPGSRVTGYGLIKESDRKIAYIDSGCIRTSNDAELSHKLLQIYDGICELMDHYSPTEVAIEQIFMHNNPNSALKLGHARGVAMVAAASHRAKICEYSAREIKQSVVGYGAAEKDQVSHMVVELLQLNRAPQKDAADALAIAICHSHMRNGLSKLIGSRGTKRRRMRL.

Catalysis depends on residues Asp8, Glu68, and Asp140. Mg(2+) contacts are provided by Asp8, Glu68, and Asp140.

This sequence belongs to the RuvC family. Homodimer which binds Holliday junction (HJ) DNA. The HJ becomes 2-fold symmetrical on binding to RuvC with unstacked arms; it has a different conformation from HJ DNA in complex with RuvA. In the full resolvosome a probable DNA-RuvA(4)-RuvB(12)-RuvC(2) complex forms which resolves the HJ. Requires Mg(2+) as cofactor.

The protein resides in the cytoplasm. The catalysed reaction is Endonucleolytic cleavage at a junction such as a reciprocal single-stranded crossover between two homologous DNA duplexes (Holliday junction).. In terms of biological role, the RuvA-RuvB-RuvC complex processes Holliday junction (HJ) DNA during genetic recombination and DNA repair. Endonuclease that resolves HJ intermediates. Cleaves cruciform DNA by making single-stranded nicks across the HJ at symmetrical positions within the homologous arms, yielding a 5'-phosphate and a 3'-hydroxyl group; requires a central core of homology in the junction. The consensus cleavage sequence is 5'-(A/T)TT(C/G)-3'. Cleavage occurs on the 3'-side of the TT dinucleotide at the point of strand exchange. HJ branch migration catalyzed by RuvA-RuvB allows RuvC to scan DNA until it finds its consensus sequence, where it cleaves and resolves the cruciform DNA. The chain is Crossover junction endodeoxyribonuclease RuvC from Legionella pneumophila (strain Corby).